We begin with the raw amino-acid sequence, 378 residues long: Tyrosinase-like protein phomQ1' (378 aa).

A helical transmembrane segment spans residues 42–62; it reads TIIVVSVITFAAIIGCWVFLS. Residues H130 and H139 each contribute to the Cu cation site. N209 is a glycosylation site (N-linked (GlcNAc...) asparagine). Residues H279 and H305 each contribute to the Cu cation site.

This sequence belongs to the tyrosinase family. The cofactor is Cu(2+).

It localises to the membrane. It functions in the pathway mycotoxin biosynthesis. In terms of biological role, tyrosinase-like protein; part of the gene cluster that mediates the biosynthesis of the phomopsins, a group of hexapeptide mycotoxins which infects lupins and causes lupinosis disease in livestock. The pathway starts with the processing of the precursor phomA' by several endopeptidases including kexin proteases as well as the cluster-specific S41 family peptidase phomP1 and the oligopeptidase phomG' to produce 10 identical copies of the hexapeptide Tyr-Val-Ile-Pro-Ile-Asp. After being excised from the precursor peptide, the core peptides are cyclized and modified post-translationally by enzymes encoded within the gene cluster. The timing and order of proteolysis of the phomA' precursor and PTMs are still unknown. Two tyrosinase-like enzymes, phomQ1' and phomQ2, catalyze the chlorination and hydroxylation of Tyr, respectively. PhomYb, is proposed to be involved in the construction of the macrocyclic structure. The other 4 ustYa family proteins may be involved in PTMs that generate the unique structure of phomopsin A. PhomYa' is required for the hydroxylation of C-beta of Tyr. PhomYc', phomYd', and phomYe are responsible for the biosynthesis of 2,3-dehydroisoleucine (dIle), 2,3-dehydroaspartic acid (dAsp), and 3,4-dehydroproline (dPro), respectively. While dIle formation by phomYc' is indispensable for the installation of dAsp by phomYd', the order of the other PTMs have not been elucidated yet. Most of the biosynthetic enzymes likely have broad substrate specificity, and thus, there might be a metabolic grid from a precursor to phomopsin A. The enzyme(s) responsible for the biosynthesis of 3,4-dehydrovaline (dVal) have also not been identified yet. Finally, phomM' acts as an S-adenosylmethionine-dependent alpha-N-methyltransferase that catalyzes two successive N-methylation reactions, converting N-desmethyl-phomopsin A to phomopsin A and phomopsin A further to an N,N-dimethylated congener called phomopsin E. The polypeptide is Tyrosinase-like protein phomQ1' (Diaporthe leptostromiformis (Lupinosis disease fungus)).